A 224-amino-acid polypeptide reads, in one-letter code: Ribose-5-phosphate isomerase A (224 aa).

Substrate is bound by residues threonine 32–threonine 35, aspartate 85–aspartate 88, and lysine 98–glycine 101. Glutamate 107 functions as the Proton acceptor in the catalytic mechanism. Lysine 125 contacts substrate.

Belongs to the ribose 5-phosphate isomerase family. Homodimer.

The catalysed reaction is aldehydo-D-ribose 5-phosphate = D-ribulose 5-phosphate. It functions in the pathway carbohydrate degradation; pentose phosphate pathway; D-ribose 5-phosphate from D-ribulose 5-phosphate (non-oxidative stage): step 1/1. In terms of biological role, catalyzes the reversible conversion of ribose-5-phosphate to ribulose 5-phosphate. This is Ribose-5-phosphate isomerase A from Pseudomonas entomophila (strain L48).